Consider the following 232-residue polypeptide: MKLVWLGHSAFRVELDGAVILIDPFLSGNPKFNGSVAEASAGATHIVLTHGHDDHIGDAPDIAKATGAQIVANFEVCMFLNGKGAENINPGNTGGSIDCGAFVVSLTQALHSSGTTENGQSIYLGNPNGVVITPKQGPTLYHMGDTEIFSDMALIAEIYNPQIGIVPIGDRFTMGAKTAALAVRRYFKFDAVVPCHYGTFGLLDQSPDAFIAALGGSGVKVDAPAIGGHMIY.

It belongs to the UPF0173 family.

The polypeptide is UPF0173 metal-dependent hydrolase Msil_0741 (Methylocella silvestris (strain DSM 15510 / CIP 108128 / LMG 27833 / NCIMB 13906 / BL2)).